Consider the following 68-residue polypeptide: Protein SlyX homolog (68 aa).

The protein belongs to the SlyX family.

The sequence is that of Protein SlyX homolog from Brucella abortus (strain S19).